The chain runs to 212 residues: Large ribosomal subunit protein uL3 (212 aa).

The tract at residues 130-155 is disordered; sequence KRGNMTHGSKNHRLPGSTGAGTTPGR.

Belongs to the universal ribosomal protein uL3 family. In terms of assembly, part of the 50S ribosomal subunit. Forms a cluster with proteins L14 and L19.

One of the primary rRNA binding proteins, it binds directly near the 3'-end of the 23S rRNA, where it nucleates assembly of the 50S subunit. This is Large ribosomal subunit protein uL3 from Rippkaea orientalis (strain PCC 8801 / RF-1) (Cyanothece sp. (strain PCC 8801)).